The sequence spans 208 residues: MTDSYDKLLEKAKDVLSSSTKNIDRLKIPEPEIIREGKATIIRNFQDIIDIINRDPDQVIKFLTRELGTNIVQNGRRLIINKKVTLEELQEKMNEYINTYVRCYECGSLDTEIQKSGRVSLLVCKACGAQHPIHTVKEFKEEEGIEEGKEYTVEISEVGSSGEGRASFRGFTIFVPGTKKGETVKVKIKKIKNDVAIAEVVSRTSDKK.

Residues Gly144–Ser202 enclose the TRAM domain.

It belongs to the eIF-2-beta/eIF-5 family. Heterotrimer composed of an alpha, a beta and a gamma chain.

Functionally, eIF-2 functions in the early steps of protein synthesis by forming a ternary complex with GTP and initiator tRNA. In Thermoplasma volcanium (strain ATCC 51530 / DSM 4299 / JCM 9571 / NBRC 15438 / GSS1), this protein is Translation initiation factor 2 subunit beta (eif2b).